Reading from the N-terminus, the 203-residue chain is Histidine biosynthesis bifunctional protein HisIE (203 aa).

The phosphoribosyl-AMP cyclohydrolase stretch occupies residues 1-114 (MLTEQQRREL…FGDTAHQWLF (114 aa)). The interval 115–203 (LYQLEQLLAE…VIENLRKRHQ (89 aa)) is phosphoribosyl-ATP pyrophosphohydrolase.

In the N-terminal section; belongs to the PRA-CH family. The protein in the C-terminal section; belongs to the PRA-PH family.

The protein localises to the cytoplasm. It carries out the reaction 1-(5-phospho-beta-D-ribosyl)-ATP + H2O = 1-(5-phospho-beta-D-ribosyl)-5'-AMP + diphosphate + H(+). The catalysed reaction is 1-(5-phospho-beta-D-ribosyl)-5'-AMP + H2O = 1-(5-phospho-beta-D-ribosyl)-5-[(5-phospho-beta-D-ribosylamino)methylideneamino]imidazole-4-carboxamide. Its pathway is amino-acid biosynthesis; L-histidine biosynthesis; L-histidine from 5-phospho-alpha-D-ribose 1-diphosphate: step 2/9. It functions in the pathway amino-acid biosynthesis; L-histidine biosynthesis; L-histidine from 5-phospho-alpha-D-ribose 1-diphosphate: step 3/9. The protein is Histidine biosynthesis bifunctional protein HisIE of Escherichia coli O6:H1 (strain CFT073 / ATCC 700928 / UPEC).